Here is a 372-residue protein sequence, read N- to C-terminus: 4-hydroxy-3-methylbut-2-en-1-yl diphosphate synthase (flavodoxin) (372 aa).

The [4Fe-4S] cluster site is built by Cys-270, Cys-273, Cys-305, and Glu-312.

It belongs to the IspG family. [4Fe-4S] cluster serves as cofactor.

The enzyme catalyses (2E)-4-hydroxy-3-methylbut-2-enyl diphosphate + oxidized [flavodoxin] + H2O + 2 H(+) = 2-C-methyl-D-erythritol 2,4-cyclic diphosphate + reduced [flavodoxin]. The protein operates within isoprenoid biosynthesis; isopentenyl diphosphate biosynthesis via DXP pathway; isopentenyl diphosphate from 1-deoxy-D-xylulose 5-phosphate: step 5/6. Its function is as follows. Converts 2C-methyl-D-erythritol 2,4-cyclodiphosphate (ME-2,4cPP) into 1-hydroxy-2-methyl-2-(E)-butenyl 4-diphosphate. This is 4-hydroxy-3-methylbut-2-en-1-yl diphosphate synthase (flavodoxin) from Vibrio campbellii (strain ATCC BAA-1116).